Reading from the N-terminus, the 450-residue chain is Ceramide glucosyltransferase (450 aa).

The Lumenal segment spans residues 1–8; sequence MSDSGTLS. A helical membrane pass occupies residues 9–29; sequence LIGGIVFLVLWVVVWSICLLG. Over 30-337 the chain is Cytoplasmic; that stretch reads WRTARIRYAH…IRVRKKMTLA (308 aa). Position 96 (Asp-96) is a short sequence motif, D1. Asp-148 is a short sequence motif (D2). A short sequence motif (D3) is located at residue Asp-286. Asp-286 functions as the Proton acceptor in the catalytic mechanism. Positions 323 to 327 match the (Q/R)XXRW motif; it reads RRVRW. Residues 338–358 form a helical membrane-spanning segment; it reads ATLLEPLTESIISGLYGAWAI. The Lumenal segment spans residues 359–361; sequence SRL. A helical membrane pass occupies residues 362–382; sequence LGGNILPLFLLHMAAWISVDI. Over 383 to 401 the chain is Cytoplasmic; the sequence is STKRALETNIKGIGPPESK. Residues 402–422 form a helical membrane-spanning segment; sequence VTFLMAWAARECLALPIWMLA. At 423–450 the chain is on the lumenal side; it reads MTSSEVVWRGQKYKIIASGEAIRLGDRN.

This sequence belongs to the glycosyltransferase 2 family.

The protein resides in the golgi apparatus membrane. It catalyses the reaction an N-acylsphing-4-enine + UDP-alpha-D-glucose = a beta-D-glucosyl-(1&lt;-&gt;1')-N-acylsphing-4-enine + UDP + H(+). Its pathway is lipid metabolism; sphingolipid metabolism. Functionally, catalyzes the final step in the biosynthesis of the membrane lipid glucosylceramide (GluCer), the transfer of glucose to ceramide. Glucosylceramides play important roles in growth, differentiation and pathogenicity. Essential factor in determining the success of fungal infection by regulating survival of yeast cells during the initial colonization of the host lung. The chain is Ceramide glucosyltransferase from Cryptococcus neoformans var. grubii serotype A (strain H99 / ATCC 208821 / CBS 10515 / FGSC 9487) (Filobasidiella neoformans var. grubii).